Reading from the N-terminus, the 552-residue chain is Protein FAM234A (552 aa).

Positions 1 to 40 (MMDDKDLEAEIHPLKNEDKKSQENLGNLPKTEDNLKNKPV) are disordered. Topologically, residues 1 to 49 (MMDDKDLEAEIHPLKNEDKKSQENLGNLPKTEDNLKNKPVPSRLSRCRT) are cytoplasmic. Positions 8–22 (EAEIHPLKNEDKKSQ) are enriched in basic and acidic residues. A Phosphoserine modification is found at serine 21. Residues 50–70 (VAFFLSLFICLFVVFVLSFII) form a helical; Signal-anchor for type II membrane protein membrane-spanning segment. The Extracellular segment spans residues 71 to 552 (PCPDRPSSED…FSRLRYRSEV (482 aa)). 4 N-linked (GlcNAc...) asparagine glycosylation sites follow: asparagine 116, asparagine 119, asparagine 314, and asparagine 473.

Belongs to the FAM234 family.

The protein resides in the membrane. The sequence is that of Protein FAM234A (Fam234a) from Rattus norvegicus (Rat).